The primary structure comprises 188 residues: MGLKADSWIKKMSLEHGMISPFCEKQVGKNVISYGLSSYGYDIRVGGEFMLFDNKNALIDPKNFDPNNATKIDACKEGYFILPANAFALAHTIEYFKMPKDTLAICLGKSTYARCGIIVNVTPFEPEFEGYITIEISNTTNLPAKVYANEGIAQVVFLQGDEVCEQSYKDRGGKYQGQVGITLPKILK.

109-114 is a dCTP binding site; the sequence is KSTYAR. Glutamate 135 functions as the Proton donor/acceptor in the catalytic mechanism. Residues glutamine 154, tyrosine 168, and glutamine 178 each coordinate dCTP.

The protein belongs to the dCTP deaminase family. As to quaternary structure, homotrimer.

The catalysed reaction is dCTP + H2O + H(+) = dUTP + NH4(+). It functions in the pathway pyrimidine metabolism; dUMP biosynthesis; dUMP from dCTP (dUTP route): step 1/2. In terms of biological role, catalyzes the deamination of dCTP to dUTP. This is dCTP deaminase from Helicobacter acinonychis (strain Sheeba).